The sequence spans 181 residues: Adenylate kinase (181 aa).

10–15 (GAGKGT) is a binding site for ATP. An NMP region spans residues 30-59 (STGDLFRSNISEGTELGLQAKQYLDAGDLV). Residues threonine 31, arginine 36, 57–59 (DLV), 85–88 (GFPR), and glutamine 92 each bind AMP. Positions 126 to 132 (GRGRADD) are LID. Arginine 127 contacts ATP. Residues arginine 129 and arginine 140 each contribute to the AMP site. An ATP-binding site is contributed by glycine 166.

It belongs to the adenylate kinase family. In terms of assembly, monomer.

It is found in the cytoplasm. The enzyme catalyses AMP + ATP = 2 ADP. The protein operates within purine metabolism; AMP biosynthesis via salvage pathway; AMP from ADP: step 1/1. Catalyzes the reversible transfer of the terminal phosphate group between ATP and AMP. Plays an important role in cellular energy homeostasis and in adenine nucleotide metabolism. The chain is Adenylate kinase from Mycobacteroides abscessus (strain ATCC 19977 / DSM 44196 / CCUG 20993 / CIP 104536 / JCM 13569 / NCTC 13031 / TMC 1543 / L948) (Mycobacterium abscessus).